Reading from the N-terminus, the 101-residue chain is NAD(P)H-quinone oxidoreductase subunit 4L, chloroplastic (101 aa).

3 consecutive transmembrane segments (helical) span residues methionine 2–isoleucine 22, methionine 32–phenylalanine 52, and isoleucine 61–valine 81.

It belongs to the complex I subunit 4L family. NDH is composed of at least 16 different subunits, 5 of which are encoded in the nucleus.

It is found in the plastid. Its subcellular location is the chloroplast thylakoid membrane. The enzyme catalyses a plastoquinone + NADH + (n+1) H(+)(in) = a plastoquinol + NAD(+) + n H(+)(out). It catalyses the reaction a plastoquinone + NADPH + (n+1) H(+)(in) = a plastoquinol + NADP(+) + n H(+)(out). Functionally, NDH shuttles electrons from NAD(P)H:plastoquinone, via FMN and iron-sulfur (Fe-S) centers, to quinones in the photosynthetic chain and possibly in a chloroplast respiratory chain. The immediate electron acceptor for the enzyme in this species is believed to be plastoquinone. Couples the redox reaction to proton translocation, and thus conserves the redox energy in a proton gradient. This Morus indica (Mulberry) protein is NAD(P)H-quinone oxidoreductase subunit 4L, chloroplastic.